The sequence spans 366 residues: Histidinol-phosphate aminotransferase 2 (366 aa).

A compositionally biased stretch (polar residues) spans 1–11 (MQVKDQLSSLQ). Residues 1–21 (MQVKDQLSSLQPYKPGKSPEQ) form a disordered region. At Lys222 the chain carries N6-(pyridoxal phosphate)lysine.

This sequence belongs to the class-II pyridoxal-phosphate-dependent aminotransferase family. Histidinol-phosphate aminotransferase subfamily. As to quaternary structure, homodimer. Pyridoxal 5'-phosphate serves as cofactor.

The catalysed reaction is L-histidinol phosphate + 2-oxoglutarate = 3-(imidazol-4-yl)-2-oxopropyl phosphate + L-glutamate. Its pathway is amino-acid biosynthesis; L-histidine biosynthesis; L-histidine from 5-phospho-alpha-D-ribose 1-diphosphate: step 7/9. In Bacillus cereus (strain ATCC 10987 / NRS 248), this protein is Histidinol-phosphate aminotransferase 2.